The sequence spans 210 residues: Neurotrophin-4 (210 aa).

The first 24 residues, 1–24, serve as a signal peptide directing secretion; it reads MLPLPSCSLPILLLFLLPSVPIES. Residues 25–80 constitute a propeptide that is removed on maturation; it reads QPPPSTLPPFLAPEWDLLSPRVVLSRGAPAGPPLLFLLEAGAFRESAGAPANRSRR. A glycan (N-linked (GlcNAc...) asparagine) is linked at asparagine 76. Cystine bridges form between cysteine 97–cysteine 170, cysteine 141–cysteine 199, and cysteine 158–cysteine 201.

It belongs to the NGF-beta family. As to expression, highest levels in prostate, lower levels in thymus, placenta, and skeletal muscle. Expressed in embryonic and adult tissues.

The protein resides in the secreted. Its function is as follows. Target-derived survival factor for peripheral sensory sympathetic neurons. May promote ameloblast differentiation and subsequent reduction in proliferation of ameloblasts. This chain is Neurotrophin-4 (NTF4), found in Homo sapiens (Human).